A 720-amino-acid chain; its full sequence is Photosystem I P700 chlorophyll a apoprotein A1 (720 aa).

A run of 8 helical transmembrane segments spans residues 62–85 (IFSA…FHGA), 148–171 (LYCT…FHYH), 186–210 (LNHH…HVSL), 282–300 (IVHH…GHMY), 337–360 (WHAQ…HHMY), 376–402 (LSLF…IFLV), 424–446 (AIIS…LYIH), and 522–540 (FLVH…LILL). [4Fe-4S] cluster contacts are provided by Cys564 and Cys573. Helical transmembrane passes span 580–601 (HVFL…HFSW) and 655–677 (LSAY…MFLF). His666 serves as a coordination point for chlorophyll a'. The chlorophyll a site is built by Met674 and Tyr682. Trp683 lines the phylloquinone pocket. A helical transmembrane segment spans residues 715-720 (AVGVAH).

The protein belongs to the PsaA/PsaB family. As to quaternary structure, the PsaA/B heterodimer binds the P700 chlorophyll special pair and subsequent electron acceptors. PSI consists of a core antenna complex that captures photons, and an electron transfer chain that converts photonic excitation into a charge separation. The eukaryotic PSI reaction center is composed of at least 11 subunits. It depends on P700 is a chlorophyll a/chlorophyll a' dimer, A0 is one or more chlorophyll a, A1 is one or both phylloquinones and FX is a shared 4Fe-4S iron-sulfur center. as a cofactor.

The protein resides in the plastid. It localises to the chloroplast thylakoid membrane. It carries out the reaction reduced [plastocyanin] + hnu + oxidized [2Fe-2S]-[ferredoxin] = oxidized [plastocyanin] + reduced [2Fe-2S]-[ferredoxin]. In terms of biological role, psaA and PsaB bind P700, the primary electron donor of photosystem I (PSI), as well as the electron acceptors A0, A1 and FX. PSI is a plastocyanin-ferredoxin oxidoreductase, converting photonic excitation into a charge separation, which transfers an electron from the donor P700 chlorophyll pair to the spectroscopically characterized acceptors A0, A1, FX, FA and FB in turn. Oxidized P700 is reduced on the lumenal side of the thylakoid membrane by plastocyanin. This chain is Photosystem I P700 chlorophyll a apoprotein A1, found in Ephedra tweediana (Vining horsetail).